The chain runs to 273 residues: 4-hydroxy-tetrahydrodipicolinate reductase (273 aa).

NAD(+)-binding positions include 12–17 (GAGGRM) and E38. R39 contacts NADP(+). Residues 102–104 (GTT) and 126–129 (AANF) each bind NAD(+). H159 serves as the catalytic Proton donor/acceptor. H160 serves as a coordination point for (S)-2,3,4,5-tetrahydrodipicolinate. K163 (proton donor) is an active-site residue. 169-170 (GT) provides a ligand contact to (S)-2,3,4,5-tetrahydrodipicolinate.

The protein belongs to the DapB family. Homotetramer.

It is found in the cytoplasm. The enzyme catalyses (S)-2,3,4,5-tetrahydrodipicolinate + NAD(+) + H2O = (2S,4S)-4-hydroxy-2,3,4,5-tetrahydrodipicolinate + NADH + H(+). It carries out the reaction (S)-2,3,4,5-tetrahydrodipicolinate + NADP(+) + H2O = (2S,4S)-4-hydroxy-2,3,4,5-tetrahydrodipicolinate + NADPH + H(+). Its pathway is amino-acid biosynthesis; L-lysine biosynthesis via DAP pathway; (S)-tetrahydrodipicolinate from L-aspartate: step 4/4. Catalyzes the conversion of 4-hydroxy-tetrahydrodipicolinate (HTPA) to tetrahydrodipicolinate. This chain is 4-hydroxy-tetrahydrodipicolinate reductase, found in Pectobacterium carotovorum subsp. carotovorum (strain PC1).